The chain runs to 158 residues: Regulator of sigma D (158 aa).

This sequence belongs to the Rsd/AlgQ family. Interacts with RpoD.

The protein localises to the cytoplasm. Its function is as follows. Binds RpoD and negatively regulates RpoD-mediated transcription activation by preventing the interaction between the primary sigma factor RpoD with the catalytic core of the RNA polymerase and with promoter DNA. May be involved in replacement of the RNA polymerase sigma subunit from RpoD to RpoS during the transition from exponential growth to the stationary phase. This chain is Regulator of sigma D, found in Escherichia coli (strain SMS-3-5 / SECEC).